Here is a 316-residue protein sequence, read N- to C-terminus: Ribosomal RNA small subunit methyltransferase H (316 aa).

Residues S35–H37, D55, F84, D105, and Q112 each bind S-adenosyl-L-methionine.

It belongs to the methyltransferase superfamily. RsmH family.

It localises to the cytoplasm. The catalysed reaction is cytidine(1402) in 16S rRNA + S-adenosyl-L-methionine = N(4)-methylcytidine(1402) in 16S rRNA + S-adenosyl-L-homocysteine + H(+). Its function is as follows. Specifically methylates the N4 position of cytidine in position 1402 (C1402) of 16S rRNA. In Streptococcus equi subsp. zooepidemicus (strain MGCS10565), this protein is Ribosomal RNA small subunit methyltransferase H.